The primary structure comprises 330 residues: tRNA N6-adenosine threonylcarbamoyltransferase (330 aa).

Positions 110 and 114 each coordinate Fe cation. Residues 133–137 (MVSGG), Asp-166, Gly-179, Asp-183, and Asn-271 each bind substrate. Asp-299 contributes to the Fe cation binding site.

It belongs to the KAE1 / TsaD family. Requires Fe(2+) as cofactor.

The protein localises to the cytoplasm. The catalysed reaction is L-threonylcarbamoyladenylate + adenosine(37) in tRNA = N(6)-L-threonylcarbamoyladenosine(37) in tRNA + AMP + H(+). Its function is as follows. Required for the formation of a threonylcarbamoyl group on adenosine at position 37 (t(6)A37) in tRNAs that read codons beginning with adenine. Is involved in the transfer of the threonylcarbamoyl moiety of threonylcarbamoyl-AMP (TC-AMP) to the N6 group of A37, together with TsaE and TsaB. TsaD likely plays a direct catalytic role in this reaction. The polypeptide is tRNA N6-adenosine threonylcarbamoyltransferase (Thermosipho africanus (strain TCF52B)).